Reading from the N-terminus, the 996-residue chain is METIDIQNRSFVVRWVKCGRGDVINYQIKPLKKSIEVGIYKKLKSSVDDHASAVHIAPDTKTLLDYTTKSLLHKGSSSNIEEHHRRSSQHSHSSSNGSDNKRKERSYSSLSISGIQQQSQEIPLREKLSASGFTLVKRVGNVSGNTMVQGDLEVKDTDYYYAFILDNSSSKNAKKKILFNASVINGDNQSMISTRSTPPARPTALSRTSTQQDMLFRVGQGRYLQGYLLKKRRKRLQGFKKRFFTLDFRYGTLSYYLNDHNQTCRGEIVISLSSVSANKKDKIIIIDSGMEVWVLKATTKENWQSWVDALQTCFDDQFEDKDTSTLEENPDILDDDKEVINKSSPQDHDHLTPTATTKSALSHRQHTQKDMDDIYVPLPSESYATFSMNLRLIQQRLEQCKKDSLSYKPTTLHQRSEGLNGTHSSSSVFTNNRVSSFNHSSSGMTSSDSLASEEVPSNKTYIEHALYNQLADLEVFVSRFVTQGEVLFKDHQILCKKAKDTRVSLTSYLSENDEFFDAEEEISRGVIILPDTEDDINNIVEETPLLGKSDQNEFTKEVQLSGSEQIASSSVESYTTNDENHSRKHLKNRHKNRRRGHPHHQKTKSAQSSTETFTSKDLFALSYPKSVTRRNDIPEAAASPPSLLSFLRKNVGKDLSSIAMPVTSNEPISILQLISETFEYAPLLTKATQRPDPITFVSAFAISFLSIYRDKTRTLRKPFNPLLAETFELIREDMGFRLISEKVSHRPPVFAFFAEHLDWECSYTVTPSQKFWGKSIELNNEGILRLKFKTTGELFEWTQPTTILKNLIAGERYMEPVNEFEVHSSKGDKSHILFDKAGMFSGRSEGFKVSIIPPPSSNRKKETLAGKWTQSLANETTHETIWEVGDLVSNPKKKYGFTKFTANLNEITEIEKGNLPPTDSRLRPDIRAYEEGNVDKAEEWKLKLEQLQRERRNKGQDVEPKYFEKVSKNEWKYITGPKSYWERRKKHDWSDISQLW.

A GOLD domain region spans residues 1-183 (METIDIQNRS…KKKILFNASV (183 aa)). The segment at 75–114 (GSSSNIEEHHRRSSQHSHSSSNGSDNKRKERSYSSLSISG) is disordered. Ser190 and Ser193 each carry phosphoserine. The residue at position 210 (Thr210) is a Phosphothreonine. The PH domain maps to 221-315 (GRYLQGYLLK…WVDALQTCFD (95 aa)). Thr323 carries the phosphothreonine modification. Ser324 carries the post-translational modification Phosphoserine. 2 positions are modified to phosphothreonine: Thr325 and Thr352. The segment at 338–372 (EVINKSSPQDHDHLTPTATTKSALSHRQHTQKDMD) is disordered. The FFAT motif lies at 514–520 (EFFDAEE). Positions 556-611 (KEVQLSGSEQIASSSVESYTTNDENHSRKHLKNRHKNRRRGHPHHQKTKSAQSSTE) are disordered. Positions 558-577 (VQLSGSEQIASSSVESYTTN) are enriched in polar residues. Residues 582 to 603 (SRKHLKNRHKNRRRGHPHHQKT) show a composition bias toward basic residues. At Ser605 the chain carries Phosphoserine. The interval 642 to 982 (SLLSFLRKNV…YITGPKSYWE (341 aa)) is OSBP-related domain (ORD). Residues 657 to 660 (SIAM), Lys717, 745 to 746 (HR), and 945 to 949 (EQLQR) each bind a 1,2-diacyl-sn-glycero-3-phospho-(1D-myo-inositol 4-phosphate).

Belongs to the OSBP family. In terms of assembly, interacts with SCS2.

The protein resides in the cytoplasm. It localises to the endoplasmic reticulum membrane. In terms of biological role, lipid transport protein (LTP) involved in non-vesicular transfer of lipids between membranes. Functions in phosphoinositide-coupled directional transport of various lipids by carrying the lipid molecule in a hydrophobic pocket and transferring it between membranes through the cytosol. Involved in maintenance of intracellular sterol distribution and homeostasis. May serve as a sensor of PI4P levels at PM-ER membrane contact site, regulating PI4P phosphatase SAC1 activity. May be involved in ergosterol transport from the plasma membrane (PM) to the ER, however it does not bind sterols directly. Plays a role in the positive regulation of vesicular transport of ceramide from the ER to the Golgi, negatively regulating COPII-mediated ER export of cargos. This chain is Oxysterol-binding protein homolog 3, found in Saccharomyces cerevisiae (strain ATCC 204508 / S288c) (Baker's yeast).